Here is a 106-residue protein sequence, read N- to C-terminus: Large ribosomal subunit protein uL24 (106 aa).

It belongs to the universal ribosomal protein uL24 family. As to quaternary structure, part of the 50S ribosomal subunit.

Functionally, one of two assembly initiator proteins, it binds directly to the 5'-end of the 23S rRNA, where it nucleates assembly of the 50S subunit. Its function is as follows. One of the proteins that surrounds the polypeptide exit tunnel on the outside of the subunit. This chain is Large ribosomal subunit protein uL24, found in Parabacteroides distasonis (strain ATCC 8503 / DSM 20701 / CIP 104284 / JCM 5825 / NCTC 11152).